The sequence spans 81 residues: Gamma-conotoxin-like TeA53 (81 aa).

The first 19 residues, 1–19 (MQKLTILLLVAAVLMSTQA), serve as a signal peptide directing secretion. The propeptide occupies 20 to 42 (LNQEQHQRAKINLLSKRKPPAER). Disulfide bonds link cysteine 49–cysteine 63, cysteine 56–cysteine 67, and cysteine 62–cysteine 72.

It belongs to the conotoxin O2 superfamily. As to expression, expressed by the venom duct.

It is found in the secreted. Its function is as follows. Gamma-conotoxins may act on voltage-gated non-specific cation pacemaker channels (HCN). The polypeptide is Gamma-conotoxin-like TeA53 (Conus textile (Cloth-of-gold cone)).